The sequence spans 585 residues: BURP domain-containing protein 17 (585 aa).

The signal sequence occupies residues 1-20 (MDRIFARFFCFLLIAAVSHA). A disordered region spans residues 63–82 (GQRNYKSSVSHVAERSHRVD). The BURP domain maps to 363-584 (FFLEKNLQQG…QPDAVVWTRR (222 aa)).

In terms of tissue distribution, expressed in leaves.

The protein is BURP domain-containing protein 17 (BURP17) of Oryza sativa subsp. japonica (Rice).